The sequence spans 306 residues: Follistatin-related protein 1 (306 aa).

Residues 1–18 form the signal peptide; sequence MWKRWLALALVTIALVHG. The region spanning 28–51 is the Follistatin-like domain; the sequence is ICANVFCGAGRECAVTEKGEPTCL. Disulfide bonds link Cys-29/Cys-40, Cys-34/Cys-50, Cys-52/Cys-82, Cys-56/Cys-75, and Cys-64/Cys-96. Residues 46-98 form the Kazal-like domain; sequence GEPTCLCIEQCKPHKRPVCGSNGKTYLNHCELHRDACLTGSKIQVDYDGHCKE. A glycan (N-linked (GlcNAc...) asparagine) is linked at Asn-142. Residues 142 to 176 enclose the EF-hand 1 domain; the sequence is NYSEILDKYFKSFDNGDSHLDSSEFLKFVEQNETA. A Phosphoserine modification is found at Ser-163. Residues Asn-173 and Asn-178 are each glycosylated (N-linked (GlcNAc...) asparagine). Positions 191–226 constitute an EF-hand 2 domain; sequence LRGLCVDALIELSDENADWKLSFQEFLKCLNPSFNP. The region spanning 231-285 is the VWFC domain; that stretch reads CALEDETYADGAETEVDCNRCVCSCGHWVCTAMTCDGKNQKGVQTHTEEEMTRYA.

As to quaternary structure, homodimer. Interacts with SCN10A. Interacts with DIP2A; DIP2A may act as a cell surface receptor for FSTL1. Interacts with BMP4. Interacts with CD14; this interaction promotes TL4-mediated signaling cascade.

It is found in the secreted. In terms of biological role, secreted glycoprotein that is involved in various physiological processes, such as angiogenesis, regulation of the immune response, cell proliferation and differentiation. Plays a role in the development of the central nervous system, skeletal system, lungs, and ureter. Promotes endothelial cell survival, migration and differentiation into network structures in an AKT-dependent manner. Also promotes survival of cardiac myocytes. Initiates various signaling cascades by activating different receptors on the cell surface such as DIP2A, TLR4 or BMP receptors. This Rattus norvegicus (Rat) protein is Follistatin-related protein 1 (Fstl1).